A 124-amino-acid chain; its full sequence is Small ribosomal subunit protein uS11 (124 aa).

This sequence belongs to the universal ribosomal protein uS11 family. Part of the 30S ribosomal subunit. Interacts with proteins S7 and S18. Binds to IF-3.

In terms of biological role, located on the platform of the 30S subunit, it bridges several disparate RNA helices of the 16S rRNA. Forms part of the Shine-Dalgarno cleft in the 70S ribosome. The protein is Small ribosomal subunit protein uS11 of Sulfurovum sp. (strain NBC37-1).